Here is a 655-residue protein sequence, read N- to C-terminus: p-hydroxybenzoic acid efflux pump subunit AaeB (655 aa).

The next 11 membrane-spanning stretches (helical) occupy residues 13–33 (FAVKLATAIVLALFVGFHFQL), 38–58 (WAVLTAAIVAAGPAFAAGGEP), 69–89 (LRIIGTFIGCIAGLVIIIAMI), 93–113 (LLMILVCCIWAGFCTWISSLV), 121–141 (WGLAGYTALIIVITIQPEPLL), 152–172 (EIVIGIVCAIMADLLFSPRSI), 370–390 (LFWLWTGWTSGSGAMVMIAVV), 407–427 (FIYGTLAALPLGLLYFLVIIP), 431–451 (QSMLLLCISLAVLGFFLGIEV), 459–479 (MGALASTINIIVLDNPMTFHF), and 482–502 (FLDSALGQIVGCVLAFTVILL).

The protein belongs to the aromatic acid exporter ArAE (TC 2.A.85) family.

Its subcellular location is the cell inner membrane. Its function is as follows. Forms an efflux pump with AaeA. Could function as a metabolic relief valve, allowing to eliminate certain compounds when they accumulate to high levels in the cell. This Escherichia coli O81 (strain ED1a) protein is p-hydroxybenzoic acid efflux pump subunit AaeB.